The chain runs to 610 residues: Menin (610 aa).

The segment at 214-390 is interaction with FANCD2; the sequence is GVAERSWLYL…SLLEAGEERP (177 aa). The disordered stretch occupies residues 460–552; that stretch reads REAEAAEAEE…SPPPEGPVLT (93 aa). A compositionally biased stretch (basic and acidic residues) spans 484-500; the sequence is RRESKPEEPPPPKKPAL. A phosphoserine mark is found at Ser-487 and Ser-543. A Phosphothreonine modification is found at Thr-594.

In terms of assembly, component of the MLL-HCF complex, at least composed of KMT2A/MLL1, MEN1, ASH2L, RBBP5, DPY30, WDR5, HCFC1 and HCFC2. Component of the menin-associated histone methyltransferase complex, at least composed of KMT2B/MLL4, MEN1, ASH2L, RBBP5, DPY30 and WDR5. Interacts with POLR2B. Interacts with POLR2A phosphorylated at 'Ser-5', but not with the unphosphorylated, nor 'Ser-2' phosphorylated POLR2A forms. Interacts with FANCD2 and DBF4. Interacts with JUND (via MBM motif); inhibits the interaction of JUND with MAPK10 and the phosphorylation of JUND by MAP kinases MAPK8 and MAPK10. Interacts with SMAD3, but not with SMAD2, nor SMAD4. Directly interacts with NFKB1, NFKB2 and RELA. Interacts with KMT2A (via MBM motif). The KMT2A-MEN1 complex interacts with PSIP1 with a greater affinity as MEN1 enhances interaction of KMT2A with PSIP1. Interacts with the fusion protein KMT2A-MLLT3. In terms of tissue distribution, ubiquitous.

The protein resides in the nucleus. In terms of biological role, essential component of a MLL/SET1 histone methyltransferase (HMT) complex, a complex that specifically methylates 'Lys-4' of histone H3 (H3K4). Functions as a transcriptional regulator. Binds to the TERT promoter and represses telomerase expression. Plays a role in TGFB1-mediated inhibition of cell-proliferation, possibly regulating SMAD3 transcriptional activity. Represses JUND-mediated transcriptional activation on AP1 sites, as well as that mediated by NFKB subunit RELA. Positively regulates HOXC8 and HOXC6 gene expression. May be involved in normal hematopoiesis through the activation of HOXA9 expression. May be involved in DNA repair. The polypeptide is Menin (MEN1) (Homo sapiens (Human)).